Reading from the N-terminus, the 20-residue chain is Superoxide dismutase [Fe] (20 aa).

The protein belongs to the iron/manganese superoxide dismutase family. Homodimer. The cofactor is Fe cation.

The protein resides in the periplasm. The enzyme catalyses 2 superoxide + 2 H(+) = H2O2 + O2. Destroys superoxide anion radicals which are normally produced within the cells and which are toxic to biological systems. In Photobacterium damsela subsp. piscicida (Pasteurella piscicida), this protein is Superoxide dismutase [Fe] (sodB).